The chain runs to 151 residues: Flagellar assembly factor FliW 2 (151 aa).

The protein belongs to the FliW family. In terms of assembly, interacts with translational regulator CsrA and flagellin(s).

It is found in the cytoplasm. In terms of biological role, acts as an anti-CsrA protein, binds CsrA and prevents it from repressing translation of its target genes, one of which is flagellin. Binds to flagellin and participates in the assembly of the flagellum. This chain is Flagellar assembly factor FliW 2, found in Desulfotalea psychrophila (strain LSv54 / DSM 12343).